Reading from the N-terminus, the 615-residue chain is Zinc finger protein 653 (615 aa).

Disordered regions lie at residues 1–46 (MAER…ARRR), 93–115 (RSGR…KRRR), and 174–235 (PLSD…SGLI). Positions 7-25 (EPGAEAEAGAGGEAAAEEG) are enriched in low complexity. Residues 106 to 115 (KKPKRKKRRR) are compositionally biased toward basic residues. Composition is skewed to low complexity over residues 192-203 (GSSDSSSSGSSS) and 212-232 (QPAK…TGSS). 5 consecutive C2H2-type zinc fingers follow at residues 467 to 492 (FHCP…NLVH), 498 to 522 (KVCP…MIIH), 528 to 550 (FTCE…RRTH), 556 to 578 (LQCE…MKKH), and 586 to 609 (FTCD…LKSH).

The protein belongs to the krueppel C2H2-type zinc-finger protein family. Interacts with NR5A1. Highly expressed in testis and spleen. Moderately expressed in lung, adrenal gland, uterus, and ovary. Very low expression in pancreas, heart, skeletal muscle, adipose tissue, kidney, and liver.

The protein localises to the nucleus. Its function is as follows. Transcriptional repressor. May repress NR5A1, PPARG, NR1H3, NR4A2, ESR1 and NR3C1 transcriptional activity. The polypeptide is Zinc finger protein 653 (Znf653) (Mus musculus (Mouse)).